The chain runs to 542 residues: CTP synthase (542 aa).

The interval 1 to 265 (MARYVFITGG…DNEVLAAFGI (265 aa)) is amidoligase domain. CTP is bound at residue serine 13. Serine 13 provides a ligand contact to UTP. Residues 14 to 19 (SLGKGI) and aspartate 71 each bind ATP. 2 residues coordinate Mg(2+): aspartate 71 and glutamate 139. CTP-binding positions include 146–148 (DIE), 186–191 (KTKPTQ), and lysine 222. Residues 186 to 191 (KTKPTQ) and lysine 222 contribute to the UTP site. Residues 291 to 541 (TIAIVGKYTG…IEAALEQSRL (251 aa)) form the Glutamine amidotransferase type-1 domain. Glycine 353 serves as a coordination point for L-glutamine. Catalysis depends on cysteine 380, which acts as the Nucleophile; for glutamine hydrolysis. L-glutamine contacts are provided by residues 381 to 384 (FGMQ), glutamate 404, and arginine 469. Residues histidine 514 and glutamate 516 contribute to the active site.

Belongs to the CTP synthase family. Homotetramer.

The catalysed reaction is UTP + L-glutamine + ATP + H2O = CTP + L-glutamate + ADP + phosphate + 2 H(+). It catalyses the reaction L-glutamine + H2O = L-glutamate + NH4(+). The enzyme catalyses UTP + NH4(+) + ATP = CTP + ADP + phosphate + 2 H(+). It functions in the pathway pyrimidine metabolism; CTP biosynthesis via de novo pathway; CTP from UDP: step 2/2. Its activity is regulated as follows. Allosterically activated by GTP, when glutamine is the substrate; GTP has no effect on the reaction when ammonia is the substrate. The allosteric effector GTP functions by stabilizing the protein conformation that binds the tetrahedral intermediate(s) formed during glutamine hydrolysis. Inhibited by the product CTP, via allosteric rather than competitive inhibition. Functionally, catalyzes the ATP-dependent amination of UTP to CTP with either L-glutamine or ammonia as the source of nitrogen. Regulates intracellular CTP levels through interactions with the four ribonucleotide triphosphates. The polypeptide is CTP synthase (Sinorhizobium medicae (strain WSM419) (Ensifer medicae)).